A 239-amino-acid polypeptide reads, in one-letter code: 1-(5-phosphoribosyl)-5-[(5-phosphoribosylamino)methylideneamino] imidazole-4-carboxamide isomerase (239 aa).

Catalysis depends on aspartate 9, which acts as the Proton acceptor. Aspartate 131 (proton donor) is an active-site residue.

Belongs to the HisA/HisF family.

The protein resides in the cytoplasm. The catalysed reaction is 1-(5-phospho-beta-D-ribosyl)-5-[(5-phospho-beta-D-ribosylamino)methylideneamino]imidazole-4-carboxamide = 5-[(5-phospho-1-deoxy-D-ribulos-1-ylimino)methylamino]-1-(5-phospho-beta-D-ribosyl)imidazole-4-carboxamide. The protein operates within amino-acid biosynthesis; L-histidine biosynthesis; L-histidine from 5-phospho-alpha-D-ribose 1-diphosphate: step 4/9. This is 1-(5-phosphoribosyl)-5-[(5-phosphoribosylamino)methylideneamino] imidazole-4-carboxamide isomerase from Bacteroides thetaiotaomicron (strain ATCC 29148 / DSM 2079 / JCM 5827 / CCUG 10774 / NCTC 10582 / VPI-5482 / E50).